The primary structure comprises 504 residues: Probable ergothioneine transporter EgtUBC (504 aa).

The ABC transmembrane type-1 domain occupies 19 to 198; that stretch reads LVQHIQISFV…LLAILFDFLL (180 aa). 6 helical membrane-spanning segments follow: residues 25 to 44, 57 to 74, 81 to 97, 146 to 170, 179 to 198, and 210 to 229; these read ISFV…GIYL, VAAI…GLLI, IVPA…LPIL, MVLI…LILL, LILL…DFLL, and IITI…VPYF. The ergothioneine binding domain stretch occupies residues 231-504; sequence SDKKEITIAG…DYLKDQGIIK (274 aa).

The protein in the N-terminal section; belongs to the binding-protein-dependent transport system permease family. This sequence in the C-terminal section; belongs to the OsmX family. In terms of assembly, the complex is probably composed of at least an ATP-binding protein (EgtUA) and a transmembrane protein (EgtUBC).

It localises to the membrane. Part of an ABC transporter complex EgtU required for the uptake of ergothioneine (EGT), a natural low-molecular weight (LMW) thiol antioxidant. Responsible for the translocation of the substrate across the membrane. Also contains a C-terminal periplasmic solute-binding domain (SBD) which binds to EGT with sub-micromolar affinity. Does not bind glycine betaine, carnitine, choline, proline, or cholate. Plays a role in bile acid tolerance. Dispensable for choline uptake. Probably not involved in betaine, carnitine or choline mediated osmo- or chill tolerance. Plays a role in enhancing virulence in mice. This Listeria monocytogenes serovar 1/2a (strain ATCC BAA-679 / EGD-e) protein is Probable ergothioneine transporter EgtUBC.